We begin with the raw amino-acid sequence, 80 residues long: Small ribosomal subunit protein uS17 (80 aa).

Belongs to the universal ribosomal protein uS17 family. In terms of assembly, part of the 30S ribosomal subunit.

Functionally, one of the primary rRNA binding proteins, it binds specifically to the 5'-end of 16S ribosomal RNA. This chain is Small ribosomal subunit protein uS17, found in Microcystis aeruginosa (strain NIES-843 / IAM M-2473).